The chain runs to 81 residues: Protein K6 (81 aa).

Belongs to the poxviridae K6 protein family.

This Homo sapiens (Human) protein is Protein K6.